The sequence spans 440 residues: Endoglucanase B (440 aa).

The signal sequence occupies residues 1–33; the sequence is MNKRLSRGKISLLASVFVTTTFMGGVNVLASTA. The active-site Proton donor is the glutamate 179. The Nucleophile role is filled by glutamate 305. The Dockerin domain maps to 381–440; sequence TSYSLGDVNKDGKVNAIDYAVLKSILLGTNTNVDLSVSDMNKDGKVNALDLAVLKKMLLS.

Belongs to the glycosyl hydrolase 5 (cellulase A) family.

The enzyme catalyses Endohydrolysis of (1-&gt;4)-beta-D-glucosidic linkages in cellulose, lichenin and cereal beta-D-glucans.. It carries out the reaction Endohydrolysis of (1-&gt;4)-beta-D-xylosidic linkages in xylans.. Its function is as follows. Has endoglucanase activity on carboxymethyl-cellulose (CMC), xylan and lichenan, but not Avicel. In Clostridium cellulovorans (strain ATCC 35296 / DSM 3052 / OCM 3 / 743B), this protein is Endoglucanase B (engB).